Reading from the N-terminus, the 378-residue chain is Ferredoxin--NADP reductase, root isozyme, chloroplastic (378 aa).

Residues 1 to 17 are compositionally biased toward low complexity; that stretch reads MATAVASQVAVSAPAGS. Residues 1-27 are disordered; that stretch reads MATAVASQVAVSAPAGSDRGLRSSGIQ. The transit peptide at 1 to 62 directs the protein to the chloroplast; the sequence is MATAVASQVA…PRHANKVLCM (62 aa). The FAD-binding FR-type domain occupies 93-221; it reads KEPYTATIVS…TGPSGKIMLL (129 aa). FAD-binding positions include 153–156, 174–176, Y180, 195–197, and T237; these read RLYS, CVR, and VCS. Residues S156 and R176 each contribute to the NADP(+) site. NADP(+)-binding positions include T237, 269–270, 299–300, K309, 337–338, and E376; these read VA, SR, and GL.

The protein belongs to the ferredoxin--NADP reductase type 1 family. It depends on FAD as a cofactor.

The protein localises to the plastid. Its subcellular location is the chloroplast. The enzyme catalyses 2 reduced [2Fe-2S]-[ferredoxin] + NADP(+) + H(+) = 2 oxidized [2Fe-2S]-[ferredoxin] + NADPH. Its pathway is energy metabolism; photosynthesis. Its function is as follows. May play a key role in regulating the relative amounts of cyclic and non-cyclic electron flow to meet the demands of the plant for ATP and reducing power. Is involved in nitrate assimilation. The protein is Ferredoxin--NADP reductase, root isozyme, chloroplastic of Oryza sativa subsp. japonica (Rice).